Here is a 618-residue protein sequence, read N- to C-terminus: Delta-like protein 3 (618 aa).

Positions 1-26 (MVSPRMSGLLSQTVILALIFLPQTRP) are cleaved as a signal peptide. Topologically, residues 27-492 (AGVFELQIHS…LRPGDPQRYL (466 aa)) are extracellular. A DSL domain is found at 176-215 (ARCEPPAVGTACTRLCRPRSAPSRCGPGLRPCAPLEDECE). EGF-like domains lie at 216–249 (APLV…PLCT), 274–310 (GPGP…LRCE), 312–351 (SGVT…SNCE), 353–389 (RVDR…PRCE), 391–427 (DLDD…RDCR), and 429–465 (RADP…ARCE). 18 disulfide bridges follow: Cys-220–Cys-231, Cys-224–Cys-237, Cys-239–Cys-248, Cys-278–Cys-289, Cys-283–Cys-298, Cys-300–Cys-309, Cys-316–Cys-327, Cys-321–Cys-339, Cys-341–Cys-350, Cys-357–Cys-368, Cys-362–Cys-377, Cys-379–Cys-388, Cys-395–Cys-406, Cys-400–Cys-415, Cys-417–Cys-426, Cys-433–Cys-444, Cys-438–Cys-453, and Cys-455–Cys-464. The helical transmembrane segment at 493 to 513 (LPPALGLLVAAGVAGAALLLV) threads the bilayer. Residues 514–618 (HVRRRGHSQD…PYPSSILSVK (105 aa)) lie on the Cytoplasmic side of the membrane. The segment covering 546–562 (NLRTQEGSGDGPSSSVD) has biased composition (polar residues). The tract at residues 546–566 (NLRTQEGSGDGPSSSVDWNRP) is disordered.

Can bind and activate Notch-1 or another Notch receptor. Ubiquitinated by MIB (MIB1 or MIB2), leading to its endocytosis and subsequent degradation.

The protein localises to the membrane. Functionally, inhibits primary neurogenesis. May be required to divert neurons along a specific differentiation pathway. Plays a role in the formation of somite boundaries during segmentation of the paraxial mesoderm. This chain is Delta-like protein 3 (DLL3), found in Homo sapiens (Human).